The sequence spans 75 residues: Brevinin-2HS2A (75 aa).

Positions 1–22 (MFTLKKPLLLLFFLGTISLSLC) are cleaved as a signal peptide. The propeptide occupies 23–40 (QEERDADEEEGEMIEEEV). C69 and C75 are disulfide-bonded.

This sequence belongs to the frog skin active peptide (FSAP) family. Brevinin subfamily. In terms of tissue distribution, expressed by the skin glands.

Its subcellular location is the secreted. Its function is as follows. Has antimicrobial activity against some Gram-positive bacteria and fungi but has no activity against a range of Gram-negative bacteria except P.faecalis. Has antimicrobial activity against the Gram-positive bacteria S.aureus ATCC 25923 (MIC=19 uM), B.licheniformis X39 (MIC=37.5 uM) and R.rhodochrous X15 (MIC=9.5 uM), is virtually inactive against E.faecium 091299 (MIC=150 uM) and S.carnosus KHS (MIC=150 uM) and inactive against E.faecalis 981. Active against the Gram-negative bacterium P.faecalis X29 (MIC=9.5 uM) and is inactive against E.coli, P.aeruginosa and S.typhi. Active against C.albicans ATCC 2002 (MIC=19 uM) and is also active against the slime mold 090223 (MIC=37.5 uM). Has extremely low hemolytic activity against human erythrocytes (LC(50)=300 uM). The chain is Brevinin-2HS2A from Odorrana hainanensis (Odor frog).